We begin with the raw amino-acid sequence, 469 residues long: Argininosuccinate lyase (469 aa).

It belongs to the lyase 1 family. Argininosuccinate lyase subfamily.

Its subcellular location is the cytoplasm. The catalysed reaction is 2-(N(omega)-L-arginino)succinate = fumarate + L-arginine. It functions in the pathway amino-acid biosynthesis; L-arginine biosynthesis; L-arginine from L-ornithine and carbamoyl phosphate: step 3/3. In Mycolicibacterium smegmatis (strain ATCC 700084 / mc(2)155) (Mycobacterium smegmatis), this protein is Argininosuccinate lyase.